The chain runs to 283 residues: MTAQVLDGKATAAAIREELKERVAALRARGVVPGLGTILVGDDPGSHAYVRGKHRDCAEVGIASIRKDLPADATQADVEAAVAELNADPACTGFIVQLPLPRGLDENRVLEKIDPAKDADGLHPSNLGKLVLMEEAPLPCTPRGIVELLNRYGVSLRGAEVVVVGRGVTVGRPLGLLLTRRSENATVTLCHTGTRDLAAHTRRADIVVAAAGVPGLITKDMVSPGAVVLDVGVTRTEKGLVGDVAPDVAEVAGYLSPNPGGVGPMTRAMLLTNVVEAAERSLS.

NADP(+) is bound by residues 165–167 (GRG), Thr192, and Val233.

It belongs to the tetrahydrofolate dehydrogenase/cyclohydrolase family. In terms of assembly, homodimer.

It catalyses the reaction (6R)-5,10-methylene-5,6,7,8-tetrahydrofolate + NADP(+) = (6R)-5,10-methenyltetrahydrofolate + NADPH. The catalysed reaction is (6R)-5,10-methenyltetrahydrofolate + H2O = (6R)-10-formyltetrahydrofolate + H(+). It participates in one-carbon metabolism; tetrahydrofolate interconversion. Catalyzes the oxidation of 5,10-methylenetetrahydrofolate to 5,10-methenyltetrahydrofolate and then the hydrolysis of 5,10-methenyltetrahydrofolate to 10-formyltetrahydrofolate. The protein is Bifunctional protein FolD of Thermobifida fusca (strain YX).